A 459-amino-acid chain; its full sequence is uncharacterized protein (459 aa).

One can recognise a TRAM domain in the interval 5 to 63 (PVEEGQKFPLTIRRMGINGEGIGYFKKAVVFVPGAITGEEVVVEAVKVRDRFTEAKLNK). [4Fe-4S] cluster contacts are provided by Cys76, Cys82, Cys85, and Cys166. Positions 290, 319, 340, and 388 each coordinate S-adenosyl-L-methionine. Cys415 acts as the Nucleophile in catalysis.

Belongs to the class I-like SAM-binding methyltransferase superfamily. RNA M5U methyltransferase family.

This is an uncharacterized protein from Listeria monocytogenes serovar 1/2a (strain ATCC BAA-679 / EGD-e).